A 170-amino-acid chain; its full sequence is N-glycosidase R617 (170 aa).

It belongs to the YbiA family.

The enzyme catalyses 2,5-diamino-6-hydroxy-4-(5-phosphoribosylamino)-pyrimidine + H2O = 2,5,6-triamino-4-hydroxypyrimidine + D-ribose 5-phosphate. It carries out the reaction 5-amino-6-(5-phospho-D-ribosylamino)uracil + H2O = 5,6-diaminouracil + D-ribose 5-phosphate. Its function is as follows. Catalyzes the hydrolysis of the N-glycosidic bond in the first two intermediates of riboflavin biosynthesis, which are highly reactive metabolites, yielding relatively innocuous products. Thus, can divert a surplus of harmful intermediates into relatively harmless products and pre-empt the damage these intermediates would otherwise do. May act on other substrates in vivo. The chain is N-glycosidase R617 from Acanthamoeba polyphaga mimivirus (APMV).